Reading from the N-terminus, the 351-residue chain is Histidinol-phosphate aminotransferase (351 aa).

Lys221 carries the post-translational modification N6-(pyridoxal phosphate)lysine.

The protein belongs to the class-II pyridoxal-phosphate-dependent aminotransferase family. Histidinol-phosphate aminotransferase subfamily. In terms of assembly, homodimer. Requires pyridoxal 5'-phosphate as cofactor.

The enzyme catalyses L-histidinol phosphate + 2-oxoglutarate = 3-(imidazol-4-yl)-2-oxopropyl phosphate + L-glutamate. Its pathway is amino-acid biosynthesis; L-histidine biosynthesis; L-histidine from 5-phospho-alpha-D-ribose 1-diphosphate: step 7/9. The chain is Histidinol-phosphate aminotransferase from Staphylococcus epidermidis (strain ATCC 12228 / FDA PCI 1200).